A 156-amino-acid polypeptide reads, in one-letter code: ATP synthase subunit b (156 aa).

A helical transmembrane segment spans residues 11–31 (AIAFVLFVLFCMKYVWPPIMA).

This sequence belongs to the ATPase B chain family. As to quaternary structure, F-type ATPases have 2 components, F(1) - the catalytic core - and F(0) - the membrane proton channel. F(1) has five subunits: alpha(3), beta(3), gamma(1), delta(1), epsilon(1). F(0) has three main subunits: a(1), b(2) and c(10-14). The alpha and beta chains form an alternating ring which encloses part of the gamma chain. F(1) is attached to F(0) by a central stalk formed by the gamma and epsilon chains, while a peripheral stalk is formed by the delta and b chains.

It localises to the cell inner membrane. In terms of biological role, f(1)F(0) ATP synthase produces ATP from ADP in the presence of a proton or sodium gradient. F-type ATPases consist of two structural domains, F(1) containing the extramembraneous catalytic core and F(0) containing the membrane proton channel, linked together by a central stalk and a peripheral stalk. During catalysis, ATP synthesis in the catalytic domain of F(1) is coupled via a rotary mechanism of the central stalk subunits to proton translocation. Its function is as follows. Component of the F(0) channel, it forms part of the peripheral stalk, linking F(1) to F(0). The protein is ATP synthase subunit b of Cronobacter sakazakii (strain ATCC BAA-894) (Enterobacter sakazakii).